The following is a 159-amino-acid chain: Riboflavin kinase (159 aa).

Residue 38-43 coordinates CDP; that stretch reads GLGEGR. Mg(2+) is bound by residues Thr67 and Asn69. FMN is bound by residues Thr126 and Glu134. CDP is bound at residue 139–142; sequence HKLR.

It belongs to the archaeal riboflavin kinase family. It depends on Mg(2+) as a cofactor.

It catalyses the reaction riboflavin + CTP = CDP + FMN + H(+). Its pathway is cofactor biosynthesis; FMN biosynthesis; FMN from riboflavin (CTP route): step 1/1. Catalyzes the CTP-dependent phosphorylation of riboflavin (vitamin B2) to form flavin mononucleotide (FMN). This chain is Riboflavin kinase, found in Sulfolobus acidocaldarius (strain ATCC 33909 / DSM 639 / JCM 8929 / NBRC 15157 / NCIMB 11770).